The chain runs to 487 residues: Arginine ADP-riboxanase OspC3 (487 aa).

Over residues 1-14 the composition is skewed to polar residues; it reads MRVETHSPSFTNPN. The interval 1 to 41 is disordered; the sequence is MRVETHSPSFTNPNPAEACSGDPTEMGSRLSGVSRAPLPHA. Histidine 137, glutamine 138, serine 139, serine 164, asparagine 167, and threonine 168 together coordinate NAD(+). Residue glutamate 325 is part of the active site. ANK repeat units lie at residues 368–398 and 444–473; these read DAVTAMWHAINKGKDEVVAYLLGNWQFEAKD and RGDTMLDNAVKYGNREMVAALIKHGADRNL.

The protein belongs to the OspC family.

It localises to the secreted. It is found in the host cytoplasm. It catalyses the reaction L-arginyl-[protein] + NAD(+) = ADP-riboxanated L-argininyl-[protein] + nicotinamide + NH4(+) + H(+). In terms of biological role, ADP-riboxanase effector that inhibits host cell pyroptosis. Acts by mediating arginine ADP-riboxanation of host CASP4/CASP11, blocking CASP4/CASP11 autoprocessing. This prevents CASP4 activation and ability to recognize and cleave GSDMD, thereby inhibiting LPS-induced pyroptosis. ADP-riboxanation takes place in two steps: OspC3 first catalyzes ADP-ribosylation of target Arg, and then initiates a deamination to remove one N-omega group. The protein is Arginine ADP-riboxanase OspC3 of Chromobacterium sp. (strain ATCC 53434 / SC 14030).